A 99-amino-acid polypeptide reads, in one-letter code: DNA-directed RNA polymerase subunit omega (99 aa).

It belongs to the RNA polymerase subunit omega family. In terms of assembly, the RNAP catalytic core consists of 2 alpha, 1 beta, 1 beta' and 1 omega subunit. When a sigma factor is associated with the core the holoenzyme is formed, which can initiate transcription.

It carries out the reaction RNA(n) + a ribonucleoside 5'-triphosphate = RNA(n+1) + diphosphate. In terms of biological role, promotes RNA polymerase assembly. Latches the N- and C-terminal regions of the beta' subunit thereby facilitating its interaction with the beta and alpha subunits. This is DNA-directed RNA polymerase subunit omega from Xanthomonas axonopodis pv. citri (strain 306).